The chain runs to 425 residues: Metacaspase-1 (425 aa).

The tract at residues 1-110 (MSYNSNPYNG…PQLPNTQTQS (110 aa)) is disordered. Residues 13–28 (YPPYNTYTRPNYSPNN) are compositionally biased toward low complexity. 2 stretches are compositionally biased toward polar residues: residues 29 to 38 (GSQSNNTVHQ) and 88 to 110 (TGANSYGNPNYSGPQLPNTQTQS). Catalysis depends on residues histidine 214 and cysteine 270.

This sequence belongs to the peptidase C14B family.

It is found in the cytoplasm. The protein localises to the nucleus. In terms of biological role, involved in cell death (apoptosis). The protein is Metacaspase-1 (pca1) of Schizosaccharomyces pombe (strain 972 / ATCC 24843) (Fission yeast).